The primary structure comprises 167 residues: Large ribosomal subunit protein bL9 (167 aa).

Belongs to the bacterial ribosomal protein bL9 family.

Binds to the 23S rRNA. This is Large ribosomal subunit protein bL9 from Chlamydia muridarum (strain MoPn / Nigg).